We begin with the raw amino-acid sequence, 273 residues long: 2-dehydro-3-deoxyphosphooctonate aldolase (273 aa).

It belongs to the KdsA family.

The protein localises to the cytoplasm. It catalyses the reaction D-arabinose 5-phosphate + phosphoenolpyruvate + H2O = 3-deoxy-alpha-D-manno-2-octulosonate-8-phosphate + phosphate. It functions in the pathway carbohydrate biosynthesis; 3-deoxy-D-manno-octulosonate biosynthesis; 3-deoxy-D-manno-octulosonate from D-ribulose 5-phosphate: step 2/3. It participates in bacterial outer membrane biogenesis; lipopolysaccharide biosynthesis. The chain is 2-dehydro-3-deoxyphosphooctonate aldolase from Nitratidesulfovibrio vulgaris (strain ATCC 29579 / DSM 644 / CCUG 34227 / NCIMB 8303 / VKM B-1760 / Hildenborough) (Desulfovibrio vulgaris).